A 963-amino-acid chain; its full sequence is Collagen alpha-1(I) chain (963 aa).

Residues 1-963 (GPMGPSGPRG…PGPPGPPGPP (963 aa)) form a disordered region. Over residues 40-54 (NGDDGEAGKPGRPGE) the composition is skewed to basic and acidic residues. The residue at position 82 (S82) is a Phosphoserine. Low complexity-rich tracts occupy residues 90–106 (DAGPAGPKGEPGSPGEN) and 129–142 (PAGARGNDGATGAA). Residues 144–156 (PPGPTGPAGPPGF) show a composition bias toward pro residues. Low complexity predominate over residues 190 to 229 (AGAAGPAGNPGADGQPGAKGANGAPGIAGAPGFPGARGPS). Residues 296–305 (GERGGPGARG) show a composition bias toward gly residues. Composition is skewed to low complexity over residues 313-337 (AGPKGPAGERGAPGPAGPKGSPGEA), 349-375 (KGITGSPGSPGPDGKTGPPGPAGQDGR), 384-403 (ARGQAGVMGFPGPKGAAGEP), 482-495 (PRGANGAPGNDGAK), 555-569 (SGPSGPAGPTGARGA), and 582-609 (AGFAGPPGADGQPGAKGEPGDAGAKGDA). S558 bears the Phosphoserine mark. Over residues 611-623 (PPGPAGPTGPPGP) the composition is skewed to pro residues. Composition is skewed to low complexity over residues 638-654 (SAGPPGATGFPGAAGRV), 683-692 (ETGPAGRPGE), and 702-726 (AGEKGSPGADGPAGAPGTPGPQGIA). Composition is skewed to pro residues over residues 767-777 (PPGPVGPPGIA) and 813-828 (AGPPGAPGAPGAPGPV). Residues 849–863 (IGPVGARGPAGPQGP) show a composition bias toward low complexity. A compositionally biased stretch (basic and acidic residues) spans 864–878 (RGDKGETGEQGDRGI). The segment covering 897–930 (PGEQGPSGASGPAGPRGPPGSAGAPGKDGINGIP) has biased composition (low complexity). Pro residues predominate over residues 948–963 (VGPPGPPGPPGPPGPP).

It belongs to the fibrillar collagen family. In terms of assembly, trimers of one alpha 2(I) and two alpha 1(I) chains. In terms of processing, prolines at the third position of the tripeptide repeating unit (G-X-Y) are hydroxylated in some or all of the chains. Forms the fibrils of tendon, ligaments and bones. In bones, the fibrils are mineralized with calcium hydroxyapatite.

Its subcellular location is the secreted. The protein resides in the extracellular space. It is found in the extracellular matrix. Its function is as follows. Type I collagen is a member of group I collagen (fibrillar forming collagen). This chain is Collagen alpha-1(I) chain, found in Tapirus terrestris (Lowland tapir).